The following is a 478-amino-acid chain: 2-succinylbenzoate--CoA ligase (478 aa).

This sequence belongs to the ATP-dependent AMP-binding enzyme family. MenE subfamily.

The catalysed reaction is 2-succinylbenzoate + ATP + CoA = 2-succinylbenzoyl-CoA + AMP + diphosphate. It functions in the pathway quinol/quinone metabolism; 1,4-dihydroxy-2-naphthoate biosynthesis; 1,4-dihydroxy-2-naphthoate from chorismate: step 5/7. Its pathway is quinol/quinone metabolism; menaquinone biosynthesis. Converts 2-succinylbenzoate (OSB) to 2-succinylbenzoyl-CoA (OSB-CoA). The polypeptide is 2-succinylbenzoate--CoA ligase (Bacillus licheniformis (strain ATCC 14580 / DSM 13 / JCM 2505 / CCUG 7422 / NBRC 12200 / NCIMB 9375 / NCTC 10341 / NRRL NRS-1264 / Gibson 46)).